The sequence spans 314 residues: UDP-N-acetylenolpyruvoylglucosamine reductase (314 aa).

The 167-residue stretch at 25 to 191 (KIGGPADLFA…VRVGMELRWG (167 aa)) folds into the FAD-binding PCMH-type domain. R170 is an active-site residue. S220 functions as the Proton donor in the catalytic mechanism. Residue E291 is part of the active site.

This sequence belongs to the MurB family. FAD serves as cofactor.

It localises to the cytoplasm. The enzyme catalyses UDP-N-acetyl-alpha-D-muramate + NADP(+) = UDP-N-acetyl-3-O-(1-carboxyvinyl)-alpha-D-glucosamine + NADPH + H(+). The protein operates within cell wall biogenesis; peptidoglycan biosynthesis. Its function is as follows. Cell wall formation. In Heliobacterium modesticaldum (strain ATCC 51547 / Ice1), this protein is UDP-N-acetylenolpyruvoylglucosamine reductase.